The following is a 261-amino-acid chain: 1-(5-phosphoribosyl)-5-[(5-phosphoribosylamino)methylideneamino] imidazole-4-carboxamide isomerase (261 aa).

The active-site Proton acceptor is aspartate 15. The Proton donor role is filled by aspartate 136.

It belongs to the HisA/HisF family.

The protein resides in the cytoplasm. The enzyme catalyses 1-(5-phospho-beta-D-ribosyl)-5-[(5-phospho-beta-D-ribosylamino)methylideneamino]imidazole-4-carboxamide = 5-[(5-phospho-1-deoxy-D-ribulos-1-ylimino)methylamino]-1-(5-phospho-beta-D-ribosyl)imidazole-4-carboxamide. Its pathway is amino-acid biosynthesis; L-histidine biosynthesis; L-histidine from 5-phospho-alpha-D-ribose 1-diphosphate: step 4/9. In Synechococcus sp. (strain JA-2-3B'a(2-13)) (Cyanobacteria bacterium Yellowstone B-Prime), this protein is 1-(5-phosphoribosyl)-5-[(5-phosphoribosylamino)methylideneamino] imidazole-4-carboxamide isomerase.